Reading from the N-terminus, the 935-residue chain is Isoleucine--tRNA ligase (935 aa).

Positions 58–68 (PYANGSIHVGH) match the 'HIGH' region motif. Residue E558 coordinates L-isoleucyl-5'-AMP. The short motif at 599-603 (KMSKS) is the 'KMSKS' region element. Residue K602 participates in ATP binding. Residues C897, C900, C917, and C920 each contribute to the Zn(2+) site.

The protein belongs to the class-I aminoacyl-tRNA synthetase family. IleS type 1 subfamily. As to quaternary structure, monomer. Zn(2+) is required as a cofactor.

The protein localises to the cytoplasm. It catalyses the reaction tRNA(Ile) + L-isoleucine + ATP = L-isoleucyl-tRNA(Ile) + AMP + diphosphate. Catalyzes the attachment of isoleucine to tRNA(Ile). As IleRS can inadvertently accommodate and process structurally similar amino acids such as valine, to avoid such errors it has two additional distinct tRNA(Ile)-dependent editing activities. One activity is designated as 'pretransfer' editing and involves the hydrolysis of activated Val-AMP. The other activity is designated 'posttransfer' editing and involves deacylation of mischarged Val-tRNA(Ile). This is Isoleucine--tRNA ligase from Francisella tularensis subsp. holarctica (strain OSU18).